The primary structure comprises 267 residues: 2-keto-3-deoxy-L-rhamnonate aldolase (267 aa).

The active-site Proton acceptor is the histidine 49. Residue glutamine 151 coordinates substrate. Glutamate 153 is a Mg(2+) binding site. Substrate-binding residues include alanine 178 and aspartate 179. Position 179 (aspartate 179) interacts with Mg(2+).

This sequence belongs to the HpcH/HpaI aldolase family. KDR aldolase subfamily. Homohexamer. Mg(2+) serves as cofactor.

The enzyme catalyses 2-dehydro-3-deoxy-L-rhamnonate = (S)-lactaldehyde + pyruvate. In terms of biological role, catalyzes the reversible retro-aldol cleavage of 2-keto-3-deoxy-L-rhamnonate (KDR) to pyruvate and lactaldehyde. The polypeptide is 2-keto-3-deoxy-L-rhamnonate aldolase (Shigella dysenteriae serotype 1 (strain Sd197)).